We begin with the raw amino-acid sequence, 860 residues long: Protein translocase subunit SecA (860 aa).

Residues Gln87, 105–109 (GEGKT), and Asp514 each bind ATP. Cys846, Cys848, Cys857, and Cys858 together coordinate Zn(2+).

It belongs to the SecA family. As to quaternary structure, monomer and homodimer. Part of the essential Sec protein translocation apparatus which comprises SecA, SecYEG and auxiliary proteins SecDF. Other proteins may also be involved. The cofactor is Zn(2+).

The protein localises to the cell membrane. It is found in the cytoplasm. It catalyses the reaction ATP + H2O + cellular proteinSide 1 = ADP + phosphate + cellular proteinSide 2.. Its function is as follows. Part of the Sec protein translocase complex. Interacts with the SecYEG preprotein conducting channel. Has a central role in coupling the hydrolysis of ATP to the transfer of proteins into and across the cell membrane, serving as an ATP-driven molecular motor driving the stepwise translocation of polypeptide chains across the membrane. The sequence is that of Protein translocase subunit SecA from Endomicrobium trichonymphae.